The primary structure comprises 123 residues: Small ribosomal subunit protein uS12 (123 aa).

The segment at 1–22 (MATINQLVRQPRKRSVEKSDVP) is disordered. Position 89 is a 3-methylthioaspartic acid (Asp-89). A disordered region spans residues 100 to 123 (GSLDTSGVKGRNQGRSKYGTKRPK). The span at 111–123 (NQGRSKYGTKRPK) shows a compositional bias: basic residues.

This sequence belongs to the universal ribosomal protein uS12 family. As to quaternary structure, part of the 30S ribosomal subunit. Contacts proteins S8 and S17. May interact with IF1 in the 30S initiation complex.

Its function is as follows. With S4 and S5 plays an important role in translational accuracy. Functionally, interacts with and stabilizes bases of the 16S rRNA that are involved in tRNA selection in the A site and with the mRNA backbone. Located at the interface of the 30S and 50S subunits, it traverses the body of the 30S subunit contacting proteins on the other side and probably holding the rRNA structure together. The combined cluster of proteins S8, S12 and S17 appears to hold together the shoulder and platform of the 30S subunit. The sequence is that of Small ribosomal subunit protein uS12 from Pseudomonas putida (strain GB-1).